Consider the following 338-residue polypeptide: tRNA N6-adenosine threonylcarbamoyltransferase (338 aa).

Fe cation contacts are provided by His-111 and His-115. Substrate is bound by residues 134–138 (LVSGG), Asp-167, Gly-180, and Asn-272. Fe cation is bound at residue Asp-300.

Belongs to the KAE1 / TsaD family. Requires Fe(2+) as cofactor.

It is found in the cytoplasm. The enzyme catalyses L-threonylcarbamoyladenylate + adenosine(37) in tRNA = N(6)-L-threonylcarbamoyladenosine(37) in tRNA + AMP + H(+). Its function is as follows. Required for the formation of a threonylcarbamoyl group on adenosine at position 37 (t(6)A37) in tRNAs that read codons beginning with adenine. Is involved in the transfer of the threonylcarbamoyl moiety of threonylcarbamoyl-AMP (TC-AMP) to the N6 group of A37, together with TsaE and TsaB. TsaD likely plays a direct catalytic role in this reaction. This chain is tRNA N6-adenosine threonylcarbamoyltransferase, found in Shewanella pealeana (strain ATCC 700345 / ANG-SQ1).